The chain runs to 320 residues: BTB and MATH domain-containing protein 36 (320 aa).

The 130-residue stretch at 7-136 folds into the MATH domain; it reads KGSIRFEIQN…DKHAVLEVQI (130 aa). The region spanning 160–227 is the BTB domain; the sequence is TDVVLVLEGK…IYPTHMLINS (68 aa).

The chain is BTB and MATH domain-containing protein 36 (bath-36) from Caenorhabditis elegans.